A 278-amino-acid chain; its full sequence is Fe(II)/2-oxoglutarate-dependent dioxygenase nvfI (278 aa).

The protein belongs to the asaB hydroxylase/desaturase family.

The catalysed reaction is asnovolin A + 2-oxoglutarate + 2 O2 = fumigatonoid A + succinate + CO2. It functions in the pathway secondary metabolite biosynthesis; terpenoid biosynthesis. Its function is as follows. Fe(II)/2-oxoglutarate-dependent dioxygenase; part of the gene cluster that mediates the biosynthesis of novofumigatonin, a heavily oxygenated meroterpenoid containing a unique orthoester moiety. The first step of the pathway is the synthesis of 3,5-dimethylorsellinic acid (DMOA) by the polyketide synthase nvfA via condensation of one acetyl-CoA starter unit with 3 malonyl-CoA units and 2 methylations. DMOA is then converted to farnesyl-DMOA by the farnesyltransferase nvfB. Epoxydation by FAD-dependent monooxygenase nvfK, followed by a protonation-initiated cyclization catalyzed by the terpene cyclase nvfL leads to the production of asnavolin H. The short chain dehydrogenase nvfC then as a 3-OH dehydrogenase of asnovolin H to yield chemesin D. There are two branches to synthesize asnovolin A from chemesin D. In one branch, chemesin D undergoes Baeyer-Villiger oxidation by nvfH, methylation by nvfJ, and enoyl reduction by the nvfM D enoylreductase that reduces the double bond between C-5'and C-6', to form respectively asnovolin I, asnovolin K, and asnovolin A. In the other branch, the methylation precedes the Baeyer-Villiger oxidation and the enoyl reduction to yield asnovolin A via the asnovolin J intermediate. Asnovolin A is further converted to fumigatonoid A by the Fe(II)/2-oxoglutarate-dependent dioxygenase nvfI that catalyzes an endoperoxidation reaction. The alpha/beta hydrolase nvfD then acts as an epimerase that converts fumigatonoid A to its C-5' epimer, which then undergoes spontaneous or nvfD-catalyzed lactonization. The following step utilizes the ketoreductase nvfG to produce fumigatonoid B. The dioxygenase nvfE further converts fumigatonoid B into fumigatonoid C. Finally the Fe(II)/2-oxoglutarate-dependent dioxygenase nvfF catalyzes two rounds of oxidation to transform fumigatonoid C into the end product, novofumigatonin A. This chain is Fe(II)/2-oxoglutarate-dependent dioxygenase nvfI, found in Aspergillus novofumigatus (strain IBT 16806).